The primary structure comprises 187 residues: UPF0301 protein YqgE (187 aa).

This sequence belongs to the UPF0301 (AlgH) family.

The protein is UPF0301 protein YqgE of Salmonella agona (strain SL483).